Consider the following 283-residue polypeptide: Pantothenate synthetase (283 aa).

An ATP-binding site is contributed by 30–37; it reads MGNLHNGH. The active-site Proton donor is histidine 37. Glutamine 61 serves as a coordination point for (R)-pantoate. Glutamine 61 lines the beta-alanine pocket. 149–152 is a binding site for ATP; sequence GEKD. Glutamine 155 contributes to the (R)-pantoate binding site. 186 to 189 contributes to the ATP binding site; it reads LSSR.

This sequence belongs to the pantothenate synthetase family. Homodimer.

The protein resides in the cytoplasm. It catalyses the reaction (R)-pantoate + beta-alanine + ATP = (R)-pantothenate + AMP + diphosphate + H(+). The protein operates within cofactor biosynthesis; (R)-pantothenate biosynthesis; (R)-pantothenate from (R)-pantoate and beta-alanine: step 1/1. Its function is as follows. Catalyzes the condensation of pantoate with beta-alanine in an ATP-dependent reaction via a pantoyl-adenylate intermediate. The sequence is that of Pantothenate synthetase from Shigella flexneri serotype 5b (strain 8401).